The sequence spans 238 residues: Pyridoxine 5'-phosphate synthase (238 aa).

Residue Asn-9 participates in 3-amino-2-oxopropyl phosphate binding. 11–12 (DH) is a 1-deoxy-D-xylulose 5-phosphate binding site. Arg-20 lines the 3-amino-2-oxopropyl phosphate pocket. His-45 (proton acceptor) is an active-site residue. 2 residues coordinate 1-deoxy-D-xylulose 5-phosphate: Arg-47 and His-52. Catalysis depends on Glu-72, which acts as the Proton acceptor. A 1-deoxy-D-xylulose 5-phosphate-binding site is contributed by Thr-102. The active-site Proton donor is the His-189. 3-amino-2-oxopropyl phosphate-binding positions include Gly-190 and 211 to 212 (GH).

This sequence belongs to the PNP synthase family. Homooctamer; tetramer of dimers.

It is found in the cytoplasm. The enzyme catalyses 3-amino-2-oxopropyl phosphate + 1-deoxy-D-xylulose 5-phosphate = pyridoxine 5'-phosphate + phosphate + 2 H2O + H(+). It participates in cofactor biosynthesis; pyridoxine 5'-phosphate biosynthesis; pyridoxine 5'-phosphate from D-erythrose 4-phosphate: step 5/5. In terms of biological role, catalyzes the complicated ring closure reaction between the two acyclic compounds 1-deoxy-D-xylulose-5-phosphate (DXP) and 3-amino-2-oxopropyl phosphate (1-amino-acetone-3-phosphate or AAP) to form pyridoxine 5'-phosphate (PNP) and inorganic phosphate. The sequence is that of Pyridoxine 5'-phosphate synthase from Ehrlichia ruminantium (strain Welgevonden).